Here is a 384-residue protein sequence, read N- to C-terminus: Na(+)/H(+) antiporter NhaA (384 aa).

11 helical membrane-spanning segments follow: residues 7–27 (FYNL…LAII), 58–78 (LLLW…GLEI), 94–114 (LVPA…FIFF), 124–144 (GWAI…SLLG), 153–173 (ILLT…IALF), 179–199 (SLLS…LNYF), 204–224 (ISVF…SGVH), 256–276 (VVFL…FVGL), 285–305 (VVLG…FLSL), 325–345 (VYGI…IGSL), and 357–377 (MVKI…FLVL).

It belongs to the NhaA Na(+)/H(+) (TC 2.A.33) antiporter family.

The protein resides in the cell inner membrane. It carries out the reaction Na(+)(in) + 2 H(+)(out) = Na(+)(out) + 2 H(+)(in). In terms of biological role, na(+)/H(+) antiporter that extrudes sodium in exchange for external protons. The protein is Na(+)/H(+) antiporter NhaA of Legionella pneumophila (strain Corby).